Here is a 955-residue protein sequence, read N- to C-terminus: MPLIMEDGINVDDLFGEPGSLELGLSPSTPSPRGLAQRLDEMRLIGCCQKIAWSKLGCIAYISQDGLRVNVRHLQCRPSDGKWVLSEETPLLPVTDAHGGHTLVHLCWNEPGAELAVADSSGRVSIYSISIALNSIAGHRQAAFDPDDDGAQIVGMMWLNTQRTVHSFYQAAKVQGRWAYSPFRRRPIGPFHPVNKAGLVCVTRSGIIRLLYQNPDSRWAEISAELKNTGYSDRLLTHAALVSTQGGILVATHSACQKICLYRVHIAWTPTQYDPGQQKPPAPWPVPSFRFLHCKVESQCDVPGTNRNAGDNAQGLPSFTNSFYCLTGLDIVLPALDNPAGSTANPWVVAIYSAPLHVTQDHPQQQGPASVIVRWQLDTGPLTLHPKFDDVPSKKNNAQVKPKLELRRLDDVYSDKYAISIDQIEYGNVLAITYDDGSVVFYDPKTMAVFNGVDDANTVTSLAQAGFHHPPEPSGLHISFSPNACAAVMLDGEGQTHLRLTEHSYGAEGGLHDENKYSAAIAALTLAFCRGCGSDVNTDDILLILVRQLTPEAQATFINEAYRALPINCNFTVEQDKLMNHPYIPRCLSIQAALGFKNKYTPRSFASSIPWAVLQLRHASVLYAFFFQYNKGGATEPHDPDVLRMVLGNTKWALDFSFYVLNELFDLADDFESLSGDQEAFTQKLKSTSSLPLIILLSSMSRAFLRFICRGLRGIYAGYATAAPLSGDARVYYAEIYQTLESAPIRIDAYEKFLAGVDSAVRHAYHGAGFGDAERPGPEKELLVNARVPPVLVPAVSTILRQTVPALKTEIDRITIYMGDYSWLGLSNDRRTEMYRRNRDVDIIKKIPCRPAASALPETNANANANQNGKSSTQVQQRRRRCVRCCEVSSDTHPPRSLLSFRMIAKLGLLRACVCGGMWTLEPSVYSSAQSSGAPVGQATGRTPALMAAGLAGSS.

This sequence belongs to the Mediator complex subunit 16 family. As to quaternary structure, component of the Mediator complex.

Its subcellular location is the nucleus. Its function is as follows. Component of the Mediator complex, a coactivator involved in the regulated transcription of nearly all RNA polymerase II-dependent genes. Mediator functions as a bridge to convey information from gene-specific regulatory proteins to the basal RNA polymerase II transcription machinery. Mediator is recruited to promoters by direct interactions with regulatory proteins and serves as a scaffold for the assembly of a functional preinitiation complex with RNA polymerase II and the general transcription factors. In Neosartorya fischeri (strain ATCC 1020 / DSM 3700 / CBS 544.65 / FGSC A1164 / JCM 1740 / NRRL 181 / WB 181) (Aspergillus fischerianus), this protein is Mediator of RNA polymerase II transcription subunit 16 (sin4).